The following is a 353-amino-acid chain: Protein RecA (353 aa).

67–74 (GPESSGKT) lines the ATP pocket.

It belongs to the RecA family.

It localises to the cytoplasm. Can catalyze the hydrolysis of ATP in the presence of single-stranded DNA, the ATP-dependent uptake of single-stranded DNA by duplex DNA, and the ATP-dependent hybridization of homologous single-stranded DNAs. It interacts with LexA causing its activation and leading to its autocatalytic cleavage. This chain is Protein RecA, found in Chlamydia pneumoniae (Chlamydophila pneumoniae).